The chain runs to 53 residues: Unknown protein from 2D-PAGE of needles (53 aa).

In Pinus pinaster (Maritime pine), this protein is Unknown protein from 2D-PAGE of needles.